The following is a 302-amino-acid chain: Ribosomal RNA small subunit methyltransferase H (302 aa).

S-adenosyl-L-methionine-binding positions include 36–38, Asp56, Phe84, Asp99, and Gln106; that span reads GGH.

Belongs to the methyltransferase superfamily. RsmH family.

It localises to the cytoplasm. It carries out the reaction cytidine(1402) in 16S rRNA + S-adenosyl-L-methionine = N(4)-methylcytidine(1402) in 16S rRNA + S-adenosyl-L-homocysteine + H(+). Its function is as follows. Specifically methylates the N4 position of cytidine in position 1402 (C1402) of 16S rRNA. This chain is Ribosomal RNA small subunit methyltransferase H, found in Flavobacterium johnsoniae (strain ATCC 17061 / DSM 2064 / JCM 8514 / BCRC 14874 / CCUG 350202 / NBRC 14942 / NCIMB 11054 / UW101) (Cytophaga johnsonae).